We begin with the raw amino-acid sequence, 144 residues long: Interleukin-3 (144 aa).

An N-terminal signal peptide occupies residues 1-17 (MSSLSILHLLLLLLALH).

Belongs to the IL-3 family. As to quaternary structure, monomer.

The protein resides in the secreted. In terms of biological role, granulocyte/macrophage colony-stimulating factors are cytokines that act in hematopoiesis by controlling the production, differentiation, and function of 2 related white cell populations of the blood, the granulocytes and the monocytes-macrophages. This CSF induces granulocytes, macrophages, mast cells, stem cells, erythroid cells, eosinophils and megakaryocytes. The protein is Interleukin-3 (IL3) of Bos taurus (Bovine).